Consider the following 480-residue polypeptide: Protein nucleotidyltransferase YdiU (480 aa).

8 residues coordinate ATP: Gly-86, Gly-88, Arg-89, Lys-109, Asp-121, Gly-122, Arg-172, and Arg-179. The Proton acceptor role is filled by Asp-248. Mg(2+) is bound by residues Asn-249 and Asp-258. ATP is bound at residue Asp-258.

It belongs to the SELO family. It depends on Mg(2+) as a cofactor. Mn(2+) is required as a cofactor.

It carries out the reaction L-seryl-[protein] + ATP = 3-O-(5'-adenylyl)-L-seryl-[protein] + diphosphate. It catalyses the reaction L-threonyl-[protein] + ATP = 3-O-(5'-adenylyl)-L-threonyl-[protein] + diphosphate. The enzyme catalyses L-tyrosyl-[protein] + ATP = O-(5'-adenylyl)-L-tyrosyl-[protein] + diphosphate. The catalysed reaction is L-histidyl-[protein] + UTP = N(tele)-(5'-uridylyl)-L-histidyl-[protein] + diphosphate. It carries out the reaction L-seryl-[protein] + UTP = O-(5'-uridylyl)-L-seryl-[protein] + diphosphate. It catalyses the reaction L-tyrosyl-[protein] + UTP = O-(5'-uridylyl)-L-tyrosyl-[protein] + diphosphate. Functionally, nucleotidyltransferase involved in the post-translational modification of proteins. It can catalyze the addition of adenosine monophosphate (AMP) or uridine monophosphate (UMP) to a protein, resulting in modifications known as AMPylation and UMPylation. This chain is Protein nucleotidyltransferase YdiU, found in Salmonella agona (strain SL483).